We begin with the raw amino-acid sequence, 220 residues long: Germin-like protein subfamily T member 2 (220 aa).

The first 27 residues, M1–S27, serve as a signal peptide directing secretion. An intrachain disulfide couples C37 to C52. One can recognise a Cupin type-1 domain in the interval S64–N212. N-linked (GlcNAc...) asparagine glycosylation is present at N71. Positions 112, 114, and 119 each coordinate Mn(2+). N-linked (GlcNAc...) asparagine glycosylation is present at N136. A Mn(2+)-binding site is contributed by H158.

This sequence belongs to the germin family. As to quaternary structure, oligomer (believed to be a pentamer but probably hexamer).

The protein localises to the secreted. The protein resides in the extracellular space. It is found in the apoplast. Functionally, may play a role in plant defense. Probably has no oxalate oxidase activity even if the active site is conserved. In Arabidopsis thaliana (Mouse-ear cress), this protein is Germin-like protein subfamily T member 2.